The sequence spans 500 residues: NAD(P)H-quinone oxidoreductase chain 4, chloroplastic (500 aa).

14 consecutive transmembrane segments (helical) span residues 4-24, 35-55, 87-107, 113-130, 134-154, 167-187, 208-228, 242-262, 274-294, 305-325, 330-350, 386-406, 411-431, and 462-482; these read FPWL…IFFL, YTIC…CYHF, IGPI…AWPV, LFHF…GSFS, LLLF…LLCM, FILY…GLAL, VLEI…SPII, HYST…YGLI, SIFS…AALT, IAYS…SLTD, GALL…FLAG, LALP…GIIT, LLIP…LTPI, and LFLS…PDFV.

It belongs to the complex I subunit 4 family.

Its subcellular location is the plastid. The protein localises to the chloroplast thylakoid membrane. It carries out the reaction a plastoquinone + NADH + (n+1) H(+)(in) = a plastoquinol + NAD(+) + n H(+)(out). The catalysed reaction is a plastoquinone + NADPH + (n+1) H(+)(in) = a plastoquinol + NADP(+) + n H(+)(out). In Nicotiana tabacum (Common tobacco), this protein is NAD(P)H-quinone oxidoreductase chain 4, chloroplastic (ndhD).